Reading from the N-terminus, the 198-residue chain is Protein ORFi in retron Ec67 (198 aa).

The protein belongs to the CI repressor protein family.

This chain is Protein ORFi in retron Ec67, found in Escherichia coli.